The primary structure comprises 336 residues: Dihydroorotate dehydrogenase (quinone) (336 aa).

Residues 62 to 66 (AGLDK) and T86 contribute to the FMN site. K66 is a substrate binding site. 111 to 115 (NRMGF) contributes to the substrate binding site. FMN is bound by residues N139 and N172. N172 lines the substrate pocket. The active-site Nucleophile is the S175. N177 contacts substrate. The FMN site is built by K217 and T245. Position 246–247 (246–247 (NT)) interacts with substrate. FMN contacts are provided by residues G268, G297, and 318-319 (YS).

It belongs to the dihydroorotate dehydrogenase family. Type 2 subfamily. As to quaternary structure, monomer. The cofactor is FMN.

The protein resides in the cell membrane. It catalyses the reaction (S)-dihydroorotate + a quinone = orotate + a quinol. It functions in the pathway pyrimidine metabolism; UMP biosynthesis via de novo pathway; orotate from (S)-dihydroorotate (quinone route): step 1/1. Catalyzes the conversion of dihydroorotate to orotate with quinone as electron acceptor. The chain is Dihydroorotate dehydrogenase (quinone) from Shigella dysenteriae serotype 1 (strain Sd197).